The sequence spans 255 residues: Glutamate racemase (255 aa).

Substrate is bound by residues 7–8 (DS) and 39–40 (YG). C70 acts as the Proton donor/acceptor in catalysis. 71–72 (NT) is a binding site for substrate. The active-site Proton donor/acceptor is the C181. 182-183 (TH) serves as a coordination point for substrate.

Belongs to the aspartate/glutamate racemases family.

It carries out the reaction L-glutamate = D-glutamate. It participates in cell wall biogenesis; peptidoglycan biosynthesis. Functionally, provides the (R)-glutamate required for cell wall biosynthesis. This Helicobacter acinonychis (strain Sheeba) protein is Glutamate racemase.